The sequence spans 257 residues: Ras-related protein Rab-26 (257 aa).

The disordered stretch occupies residues 1–53 (MSRKKTPKSKGGSVPAASTLPAAANGPRLAHPRTARPGPEAPPNGPPQSGRPS). GTP contacts are provided by serine 73, glycine 74, valine 75, glycine 76, lysine 77, threonine 78, cysteine 79, serine 96, and threonine 97. Threonine 78 is a Mg(2+) binding site. Short sequence motifs (switch) lie at residues 87-102 (GAFLAGTFISTVGIDF) and 120-137 (DTAGQERFRSVTHAYYRD). Threonine 97 and aspartate 120 together coordinate Mg(2+). Residues glycine 123, asparagine 178, lysine 179, aspartate 181, alanine 209, and lysine 210 each coordinate GTP. 2 S-geranylgeranyl cysteine lipidation sites follow: cysteine 254 and cysteine 255.

This sequence belongs to the small GTPase superfamily. Rab family. In terms of assembly, interacts with ADRA2B. Interacts with RIMS1. Mg(2+) is required as a cofactor. In terms of tissue distribution, expressed in pancreas, kidney, brain, submandibular gland, and lung.

The protein resides in the cytoplasmic vesicle. It is found in the secretory vesicle membrane. It localises to the golgi apparatus membrane. It carries out the reaction GTP + H2O = GDP + phosphate + H(+). Regulated by guanine nucleotide exchange factors (GEFs) which promote the exchange of bound GDP for free GTP. Regulated by GTPase activating proteins (GAPs) which increase the GTP hydrolysis activity. Inhibited by GDP dissociation inhibitors (GDIs). In terms of biological role, the small GTPases Rab are key regulators of intracellular membrane trafficking, from the formation of transport vesicles to their fusion with membranes. Rabs cycle between an inactive GDP-bound form and an active GTP-bound form that is able to recruit to membranes different set of downstream effectors directly responsible for vesicle formation, movement, tethering and fusion. RAB26 mediates transport of ADRA2A and ADRA2B from the Golgi to the cell membrane. Plays a role in the maturation of zymogenic granules and in pepsinogen secretion in the stomach. Plays a role in the secretion of amylase from acinar granules in the parotid gland. The chain is Ras-related protein Rab-26 from Rattus norvegicus (Rat).